A 421-amino-acid polypeptide reads, in one-letter code: 5-hydroxytryptamine receptor 2 (421 aa).

Over 1–21 (MLCGRLRHTMNSTTCFFSHRT) the chain is Extracellular. An N-linked (GlcNAc...) asparagine glycan is attached at asparagine 11. A helical membrane pass occupies residues 22-42 (VLIGIVGSLIIAVSVVGNVLV). Over 43–59 (CLAIFTEPILSHSKSKF) the chain is Cytoplasmic. A helical membrane pass occupies residues 60–79 (FIVSLAVADLLLALLVMTFA). Residues 80–95 (LVNSLYGYWLFGETFC) are Extracellular-facing. Cysteines 95 and 210 form a disulfide. The chain crosses the membrane as a helical span at residues 96–118 (FIWMSADVMCETASIFSICVISY). Residues 119–138 (NRLKQVQKPLQYEEFMTTTR) are Cytoplasmic-facing. The helical transmembrane segment at 139–160 (ALLIIASLWICSFVVSFVPFFL) threads the bilayer. Residues 161 to 213 (EWHELSMEEIKTIFKDLISDKVKTSDAHTFSFALEQTLGDNRTSNPKPECLFD) lie on the Extracellular side of the membrane. Residues 214 to 234 (VHFIYSVIYSLFCFYIPCTLM) form a helical membrane-spanning segment. Residues 235–274 (LRNYLRLFLIAKKHHVRIKNLHRLHRNQGTQGSKAARTLT) are Cytoplasmic-facing. Residues 275 to 295 (IITGTFLACWLPFFIINPIEA) traverse the membrane as a helical segment. Residues 296-304 (VDEHLIPLE) lie on the Extracellular side of the membrane. A helical membrane pass occupies residues 305–325 (CFMVTIWLGYFNSCVNPIIYG). At 326 to 421 (TSNSKFRAAF…MLSESDTVFS (96 aa)) the chain is on the cytoplasmic side.

The protein belongs to the G-protein coupled receptor 1 family. As to expression, central nervous system.

Its subcellular location is the cell membrane. This is one of the several different receptors for 5-hydroxytryptamine (serotonin). 5-HT plays important roles in various behavioral and physiological processes in aplysia. These include feeding, locomotion, circadian rhythm, learning and memory, synaptic plasticity, and synaptic growth. This receptor is mediated by G proteins that stimulate phospholipase C. In Aplysia californica (California sea hare), this protein is 5-hydroxytryptamine receptor 2 (5HTB2).